A 493-amino-acid chain; its full sequence is Trigger factor (493 aa).

The PPIase FKBP-type domain maps to 169-254; the sequence is GDRVTMDYLG…VKEVAAPAET (86 aa). Residues 439–493 are disordered; the sequence is ELLAEDEDGDDTKPAKKSAKKKAAKAEDASAEGEEAAPKKKAAAKKKAADEGDAE.

It belongs to the FKBP-type PPIase family. Tig subfamily.

The protein localises to the cytoplasm. It catalyses the reaction [protein]-peptidylproline (omega=180) = [protein]-peptidylproline (omega=0). Functionally, involved in protein export. Acts as a chaperone by maintaining the newly synthesized protein in an open conformation. Functions as a peptidyl-prolyl cis-trans isomerase. The chain is Trigger factor from Allorhizobium ampelinum (strain ATCC BAA-846 / DSM 112012 / S4) (Agrobacterium vitis (strain S4)).